The primary structure comprises 201 residues: Recombination protein RecR (201 aa).

The C4-type zinc-finger motif lies at 59–74 (CEICGNMDTENICRIC). The Toprim domain occupies 82–177 (SIIAIVETVA…KISRLASGIP (96 aa)).

This sequence belongs to the RecR family.

Its function is as follows. May play a role in DNA repair. It seems to be involved in an RecBC-independent recombinational process of DNA repair. It may act with RecF and RecO. The protein is Recombination protein RecR of Rickettsia peacockii (strain Rustic).